A 466-amino-acid polypeptide reads, in one-letter code: Glutamate decarboxylase (466 aa).

Lys277 carries the N6-(pyridoxal phosphate)lysine modification.

This sequence belongs to the group II decarboxylase family. The cofactor is pyridoxal 5'-phosphate.

It carries out the reaction L-glutamate + H(+) = 4-aminobutanoate + CO2. Functionally, converts internalized glutamate to GABA and increases the internal pH. Involved in glutamate-dependent acid resistance. This Lactococcus lactis subsp. cremoris (strain MG1363) protein is Glutamate decarboxylase (gadB).